Reading from the N-terminus, the 369-residue chain is 1-aminocyclopropane-1-carboxylate oxidase homolog 2 (369 aa).

Residues 217–318 form the Fe2OG dioxygenase domain; sequence KGLRMLCHYF…VSVACFFHTH (102 aa). Positions 241, 243, and 297 each coordinate Fe cation.

Belongs to the iron/ascorbate-dependent oxidoreductase family. Fe cation is required as a cofactor.

This chain is 1-aminocyclopropane-1-carboxylate oxidase homolog 2, found in Arabidopsis thaliana (Mouse-ear cress).